Reading from the N-terminus, the 382-residue chain is Proton extrusion protein PxcA (382 aa).

The next 4 membrane-spanning stretches (helical) occupy residues 156-176 (TLIS…VQQV), 257-277 (AVKN…VCLF), 305-325 (IILF…TVLL), and 340-360 (FILL…KYWI).

The protein belongs to the CemA family.

It localises to the cell inner membrane. Required for H(+) efflux immediately after light irradiation to form a rapid H(+) concentration gradient across the thylakoid membranes. Together with PxcL, contributes to transient H(+) uptake following dark to light transition. The polypeptide is Proton extrusion protein PxcA (Synechococcus sp. (strain CC9311)).